The following is a 762-amino-acid chain: Transcription factor kpeA (762 aa).

The disordered stretch occupies residues 267 to 361 (FDHTSHGSQS…PLKPDQRKQA (95 aa)). Positions 294–312 (KKPSSPTRSTGSSSSTSPP) are enriched in low complexity. Residues 370–401 (CLRCKFLKKTCDKGEPCAGCQPSHARLWQVPC) constitute a DNA-binding region (zn(2)-C6 fungal-type).

Its subcellular location is the nucleus. Transcription factor that regulates conidiation as well as kojic acid production, likely by negatively controlling kojR and kojA expression. In Aspergillus oryzae (strain ATCC 42149 / RIB 40) (Yellow koji mold), this protein is Transcription factor kpeA.